The sequence spans 269 residues: Glutamate racemase (269 aa).

Substrate-binding positions include 7–8 (DS) and 39–40 (YG). Residue Cys70 is the Proton donor/acceptor of the active site. 71–72 (NT) contacts substrate. Cys194 acts as the Proton donor/acceptor in catalysis. Substrate is bound at residue 195 to 196 (TH).

The protein belongs to the aspartate/glutamate racemases family.

It catalyses the reaction L-glutamate = D-glutamate. The protein operates within cell wall biogenesis; peptidoglycan biosynthesis. In terms of biological role, provides the (R)-glutamate required for cell wall biosynthesis. The sequence is that of Glutamate racemase from Ruegeria pomeroyi (strain ATCC 700808 / DSM 15171 / DSS-3) (Silicibacter pomeroyi).